The primary structure comprises 337 residues: uncharacterized protein (337 aa).

Residues 42-66 (SHSVSPSPSPSDFSSSSSSSSSSPS) are compositionally biased toward low complexity. Residues 42–68 (SHSVSPSPSPSDFSSSSSSSSSSPSTF) form a disordered region. The Exonuclease domain occupies 129–304 (FLVIDLEGKV…DDTKNITRVV (176 aa)). Positions 133, 135, and 234 each coordinate Mg(2+). Glu-135 functions as the Proton acceptor in the catalytic mechanism. Glu-135 contacts AMP. His-291 serves as the catalytic Proton acceptor. His-291 lines the AMP pocket. Asp-296 is a binding site for Mg(2+).

This is an uncharacterized protein from Arabidopsis thaliana (Mouse-ear cress).